We begin with the raw amino-acid sequence, 232 residues long: Clarin-1 (232 aa).

Residues 8–28 form a helical membrane-spanning segment; the sequence is IIFCMAGVFSFACALGVVTAL. Asn48 carries N-linked (GlcNAc...) asparagine glycosylation. 3 consecutive transmembrane segments (helical) span residues 101-121, 135-155, and 186-206; these read VILFSAILIVLTMVGTAFFMY, LGLYLLSFISGSCGCLVMILF, and TTSFWVIFFCFFVHFLNGLLI.

Belongs to the clarin family. In terms of tissue distribution, widely expressed. Found in the retina.

It localises to the cell membrane. Its function is as follows. May have a role in the excitatory ribbon synapse junctions between hair cells and cochlear ganglion cells and presumably also in analogous synapses within the retina. The chain is Clarin-1 (CLRN1) from Homo sapiens (Human).